Reading from the N-terminus, the 439-residue chain is Putative phosphatidate cytidylyltransferase (439 aa).

Residues 1–37 (MARKRTNKRNNSDKENGNVGVVQNKDSASSKTTEPAR) are disordered. S12 is modified (phosphoserine). Residues 24-33 (NKDSASSKTT) show a composition bias toward polar residues. The next 7 membrane-spanning stretches (helical) occupy residues 52–71 (FITRTIWTFLLLGIFFTALA), 76–98 (WVVLLVTIVQIGVYKEVIAIASV), 110–130 (FINWYFLMTTLYYAYGESIYA), 145–165 (LVLHHRFISFMLYIIGFVLFV), 180–199 (FCWTHMTLLLVVGQSHFMIN), 245–265 (GFLGGWICTVVIGSLISYVLM), and 321–341 (FHLAIFATFSSLIAPFGGFFA).

The protein belongs to the CDS family. Requires Mg(2+) as cofactor.

It localises to the endoplasmic reticulum membrane. The enzyme catalyses a 1,2-diacyl-sn-glycero-3-phosphate + CTP + H(+) = a CDP-1,2-diacyl-sn-glycerol + diphosphate. Its pathway is phospholipid metabolism; CDP-diacylglycerol biosynthesis; CDP-diacylglycerol from sn-glycerol 3-phosphate: step 3/3. Its function is as follows. Supplies CDP-diacylglycerol, which may play an important role as both a precursor to phosphoinositide biosynthesis in the plasma membrane and as a negative effector of phosphatidylinositol 4-kinase activity, thereby exerting an effect on cell proliferation via a lipid-dependent signal transduction cascade. This Schizosaccharomyces pombe (strain 972 / ATCC 24843) (Fission yeast) protein is Putative phosphatidate cytidylyltransferase.